Reading from the N-terminus, the 147-residue chain is uncharacterized protein (147 aa).

Positions 50 to 140 (NQKKAIIVDT…WNSENLPTTF (91 aa)) constitute a Rhodanese domain.

This is an uncharacterized protein from Buchnera aphidicola subsp. Schizaphis graminum (strain Sg).